The following is a 197-amino-acid chain: EF-hand calcium-binding domain-containing protein 9 (197 aa).

Residues Asp58 and Asp69 each coordinate Ca(2+). 3 EF-hand domains span residues 59-94, 100-135, and 136-171; these read LKKA…LLAH, GQFM…FLFN, and IQKQ…YTDK. Ca(2+)-binding residues include Asp149, Asp153, Arg155, and Glu160. Basic and acidic residues predominate over residues 177–188; the sequence is KTEEKEKGERKR. Residues 177–197 form a disordered region; the sequence is KTEEKEKGERKRSLYSKCHIK.

In terms of assembly, component of the CatSper complex or CatSpermasome composed of the core pore-forming members CATSPER1, CATSPER2, CATSPER3 and CATSPER4 as well as auxiliary members CATSPERB, CATSPERG, CATSPERD, CATSPERE, CATSPERZ, C2CD6/CATSPERT, TMEM249, TMEM262 and EFCAB9. HSPA1 may be an additional auxiliary complex member. The core complex members CATSPER1, CATSPER2, CATSPER3 and CATSPER4 form a heterotetrameric channel. The auxiliary CATSPERB, CATSPERG, CATSPERD and CATSPERE subunits form a pavilion-like structure over the pore which stabilizes the complex through interactions with CATSPER4, CATSPER3, CATSPER1 and CATSPER2 respectively. TMEM262/CATSPERH interacts with CATSPERB, further stabilizing the complex. C2CD6/CATSPERT interacts at least with CATSPERD and is required for targeting the CatSper complex in the flagellar membrane. Interacts with CATSPERZ; the interaction is direct, Ca(2+)-dependent and connects EFCAB9 with the CatSper complex. Dissociates from CATSPERZ at elevated pH.

The protein localises to the cytoplasm. Its subcellular location is the cell projection. It is found in the cilium. It localises to the flagellum. Functionally, auxiliary component of the CatSper complex, a complex involved in sperm cell hyperactivation. pH-dependent Ca(2+) sensor required to activate the CatSper channel. Sperm cell hyperactivation is needed for sperm motility which is essential late in the preparation of sperm for fertilization. Associates with the CatSper complex via direct interaction with CATSPERZ, and senses intracellular Ca(2+). Together with CATSPERZ, associates with the CatSper channel pore and is required for the two-row structure of each single CatSper channel. This is EF-hand calcium-binding domain-containing protein 9 from Homo sapiens (Human).